Reading from the N-terminus, the 278-residue chain is tRNA pseudouridine synthase A (278 aa).

Catalysis depends on Asp52, which acts as the Nucleophile. Position 110 (Tyr110) interacts with substrate. The tract at residues 259–278 (SKRQNGTTKVEQPSSYVHEE) is disordered. Polar residues predominate over residues 261-278 (RQNGTTKVEQPSSYVHEE).

Belongs to the tRNA pseudouridine synthase TruA family. As to quaternary structure, homodimer.

It catalyses the reaction uridine(38/39/40) in tRNA = pseudouridine(38/39/40) in tRNA. Its function is as follows. Formation of pseudouridine at positions 38, 39 and 40 in the anticodon stem and loop of transfer RNAs. This is tRNA pseudouridine synthase A from Chloroflexus aurantiacus (strain ATCC 29366 / DSM 635 / J-10-fl).